A 317-amino-acid polypeptide reads, in one-letter code: Ribosomal protein L11 methyltransferase (317 aa).

The S-adenosyl-L-methionine site is built by Thr158, Gly179, Asp201, and Asn244.

The protein belongs to the methyltransferase superfamily. PrmA family.

It localises to the cytoplasm. It catalyses the reaction L-lysyl-[protein] + 3 S-adenosyl-L-methionine = N(6),N(6),N(6)-trimethyl-L-lysyl-[protein] + 3 S-adenosyl-L-homocysteine + 3 H(+). In terms of biological role, methylates ribosomal protein L11. The protein is Ribosomal protein L11 methyltransferase of Streptococcus pyogenes serotype M28 (strain MGAS6180).